A 415-amino-acid polypeptide reads, in one-letter code: uncharacterized protein (415 aa).

Disordered stretches follow at residues 39–77 (FLPP…RPIH), 220–247 (AEDK…HPLT), and 346–415 (VTLN…NGSK). 3 stretches are compositionally biased toward basic and acidic residues: residues 220–238 (AEDK…ESKN), 365–380 (DVNK…DKHM), and 400–415 (SKTE…NGSK).

This is an uncharacterized protein from Rattus norvegicus (Rat).